The following is a 475-amino-acid chain: Coagulation factor X (475 aa).

The signal sequence occupies residues 1–20 (MAGRLLLLLLCAALPDELRA). The propeptide occupies 21-40 (EGGVFIKKESADKFLERTKR). In terms of domain architecture, Gla spans 41–85 (ANSFLEEMKQGNIERECNEERCSKEEAREAFEDNEKTEEFWNIYV). Residues Glu46, Glu47, Glu54, Glu56, Glu59, Glu60, Glu65, Glu66, Glu69, Glu72, and Glu79 each carry the 4-carboxyglutamate modification. A disulfide bridge links Cys57 with Cys62. The 37-residue stretch at 86 to 122 (DGDQCSSNPCHYGGQCKDGLGSYTCSCLDGYQGKNCE) folds into the EGF-like 1; calcium-binding domain. 11 disulfide bridges follow: Cys90/Cys101, Cys95/Cys110, Cys112/Cys121, Cys129/Cys140, Cys136/Cys152, Cys154/Cys167, Cys175/Cys348, Cys247/Cys252, Cys267/Cys283, Cys396/Cys410, and Cys421/Cys449. Asp103 is subject to (3R)-3-hydroxyaspartate. The EGF-like 2 domain occupies 125–168 (IPKYCKINNGDCEQFCSIKKSVQKDVVCSCTSGYELAEDGKQCV). Residues 186–240 (SVILPTNSNTNATSDQDVPSTNGSILEEVFTTTTESPTPPPRNGSSITDPNVDTR) constitute a propeptide, activation peptide. Residues Asn196, Asn207, and Asn228 are each glycosylated (N-linked (GlcNAc...) asparagine). The interval 216 to 237 (TTTTESPTPPPRNGSSITDPNV) is disordered. The Peptidase S1 domain occupies 241–473 (IVGGDECRPG…FLRWVRTVMR (233 aa)). Catalysis depends on His282, which acts as the Charge relay system. Asn285 carries N-linked (GlcNAc...) asparagine glycosylation. Asp328 acts as the Charge relay system in catalysis. Ser425 serves as the catalytic Charge relay system.

The protein belongs to the peptidase S1 family. In terms of assembly, the two chains are formed from a single-chain precursor by the excision of two Arg residues and are held together by 1 or more disulfide bonds. Post-translationally, the vitamin K-dependent, enzymatic carboxylation of some glutamate residues allows the modified protein to bind calcium. In terms of processing, the activation peptide is cleaved by factor IXa (in the intrinsic pathway), or by factor VIIa (in the extrinsic pathway). The iron and 2-oxoglutarate dependent 3-hydroxylation of aspartate and asparagine is (R) stereospecific within EGF domains. In terms of tissue distribution, liver and chorioallantoic membrane.

It localises to the secreted. The enzyme catalyses Selective cleavage of Arg-|-Thr and then Arg-|-Ile bonds in prothrombin to form thrombin.. Its function is as follows. Factor Xa is a vitamin K-dependent glycoprotein that converts prothrombin to thrombin in the presence of factor Va, calcium and phospholipid during blood clotting. VAP cleaves the fusion proteins of Sendai virus, NDV, and influenza virus a at a specific single arginine-containing site, and plays a key role in the viral spreading in the allantoic sac. This chain is Coagulation factor X (F10), found in Gallus gallus (Chicken).